An 89-amino-acid polypeptide reads, in one-letter code: AGSVGRTAGGPGFTSPGRVAGGTGSPTASARGGTPGGSEGFTAAPGSESTGGHSGAPGTTLAGRAGTTLGPRSEPSGTGVGGSPVATTL.

Positions 1 to 89 (AGSVGRTAGG…VGGSPVATTL (89 aa)) are disordered. Residue S3 is glycosylated (O-linked (GalNAc...) serine; partial). O-linked (GalNAc...) threonine; partial glycosylation is found at T7 and T14. An O-linked (GalNAc...) serine; partial glycan is attached at S15. T23 is a glycosylation site (O-linked (GalNAc...) threonine; partial). O-linked (GalNAc...) serine; partial glycosylation occurs at S25. An O-linked (GalNAc...) threonine; partial glycan is attached at T27. S29 carries an O-linked (GalNAc...) serine; partial glycan. T34 is a glycosylation site (O-linked (GalNAc...) threonine; partial). S38 carries O-linked (GalNAc...) serine; partial glycosylation. O-linked (GalNAc...) threonine; partial glycosylation is present at T42. S47 and S49 each carry an O-linked (GalNAc...) serine; partial glycan. T50 is a glycosylation site (O-linked (GalNAc...) threonine; partial). S54 carries O-linked (GalNAc...) serine; partial glycosylation. The span at 56-71 (APGTTLAGRAGTTLGP) shows a compositional bias: low complexity. O-linked (GalNAc...) threonine; partial glycosylation is found at T59, T60, T67, and T68. Residues S73 and S76 are each glycosylated (O-linked (GalNAc...) serine; partial). O-linked (GalNAc...) threonine; partial glycosylation is present at T78. S83 is a glycosylation site (O-linked (GalNAc...) serine; partial).

In terms of processing, heavily O-glycosylated at most but not all Ser and Thr residues. Expressed in the submaxillary salivary gland.

Its subcellular location is the secreted. This Canis lupus familiaris (Dog) protein is Submaxillary mucin.